A 166-amino-acid polypeptide reads, in one-letter code: Cyanate hydratase (166 aa).

Active-site residues include R106, E109, and S132.

The protein belongs to the cyanase family.

It catalyses the reaction cyanate + hydrogencarbonate + 3 H(+) = NH4(+) + 2 CO2. In terms of biological role, catalyzes the reaction of cyanate with bicarbonate to produce ammonia and carbon dioxide. The polypeptide is Cyanate hydratase (Verticillium alfalfae (strain VaMs.102 / ATCC MYA-4576 / FGSC 10136) (Verticillium wilt of alfalfa)).